The following is a 121-amino-acid chain: LOB domain-containing protein 24 (121 aa).

The LOB domain maps to 4 to 105 (KRCAACKYLR…NELAKTQAEI (102 aa)).

It belongs to the LOB domain-containing protein family.

The sequence is that of LOB domain-containing protein 24 (LBD24) from Arabidopsis thaliana (Mouse-ear cress).